Here is a 644-residue protein sequence, read N- to C-terminus: (E2-independent) E3 ubiquitin-conjugating enzyme FATS (644 aa).

Residues 1-67 (MISPVVISRL…LGILTPSDDQ (67 aa)) form a required for interaction with p53/TP53 region. Disordered stretches follow at residues 62–83 (TPSDDQGLETEPLSTGDNLGKG), 305–349 (LGSG…SSHT), 367–413 (VLSG…SILS), and 475–507 (NEDPTVTPEPSPATPSPSTPEGAQSSDPSEDSY). The segment at 67–175 (QGLETEPLST…RLSARQDYWV (109 aa)) is required for interaction with HDAC1. Low complexity predominate over residues 398 to 410 (EGDSSPSSDGQPS). Over residues 481–492 (TPEPSPATPSPS) the composition is skewed to pro residues. An ALMS motif region spans residues 516-644 (TLQEALEVHR…LDQLLQRNAV (129 aa)). The stretch at 598–629 (KRIYNNLPEVKKKKEEQKKRMILQSNRLRAEV) forms a coiled coil.

Interacts with HDAC1; the interaction prevents binding of HDAC1 to CDKN1A/p21 and facilitates the acetylation and stabilization of CDKN1A/p21. Interacts with p53/TP53; the interaction inhibits binding of p53/TP53 and MDM2. In terms of tissue distribution, highly expressed in testis. Weak expression found in brain, lung, heart, ovary, thymus, spleen and kidney.

The protein resides in the cytoplasm. Its subcellular location is the cytoskeleton. It is found in the microtubule organizing center. It localises to the centrosome. Its function is as follows. Tumor suppressor that is required to sustain G2/M checkpoint after DNA damage. Acts as a p53/TP53 activator by inhibiting MDM2 binding to p53/TP53 and stimulating non-proteolytic polyubiquitination of p53/TP53. Exhibits ubiquitin ligase (E3) activity and assemble ubiquitin polymers through 'Lys-11'- (K11-), 'Lys-29'- (K29-) and 'Lys-63'- (K63)-linkages, independently of the ubiquitin-conjugating enzyme (E2). Promotes p53/TP53-dependent transcription of CDKN1A/p21, leading to robust checkpoint response. Mediates CDKN1A/p21 protein stability in a ubiquitin-independent manner. Interacts with HDAC1 and prevents binding of HDAC1 to CDKN1A/p21 and facilitates the acetylation and stabilization of CDKN1A/p21. May have a role in the assembly of primary cilia. This Mus musculus (Mouse) protein is (E2-independent) E3 ubiquitin-conjugating enzyme FATS.